The following is an 842-amino-acid chain: Alanine--tRNA ligase (842 aa).

Residues H549, H553, C650, and H654 each coordinate Zn(2+).

Belongs to the class-II aminoacyl-tRNA synthetase family. Requires Zn(2+) as cofactor.

Its subcellular location is the cytoplasm. The enzyme catalyses tRNA(Ala) + L-alanine + ATP = L-alanyl-tRNA(Ala) + AMP + diphosphate. In terms of biological role, catalyzes the attachment of alanine to tRNA(Ala) in a two-step reaction: alanine is first activated by ATP to form Ala-AMP and then transferred to the acceptor end of tRNA(Ala). Also edits incorrectly charged Ser-tRNA(Ala) and Gly-tRNA(Ala) via its editing domain. In Campylobacter jejuni (strain RM1221), this protein is Alanine--tRNA ligase.